Consider the following 330-residue polypeptide: Polygalacturonase inhibitor (330 aa).

The N-terminal stretch at 1–24 is a signal peptide; the sequence is MELKFSTFLSLTLLFSSVLNPALS. Disulfide bonds link C27-C57 and C58-C65. 7 LRR repeats span residues 69 to 92, 93 to 118, 119 to 141, 142 to 166, 167 to 192, 194 to 215, and 217 to 237; these read TNRI…LVGD, LPYL…IAKL, KGLK…FLSQ, LKNL…LSEL, PNLG…QFIG, VPDL…FAQM, and FTSI…IFGL. N-linked (GlcNAc...) asparagine glycosylation is found at N106, N130, N144, and N154. N-linked (GlcNAc...) asparagine glycosylation is found at N238 and N254. LRR repeat units lie at residues 239 to 261, 262 to 285, and 287 to 309; these read KTTQ…VEFP, TSLT…FTQL, and FQFL…KLQS. N291 carries N-linked (GlcNAc...) asparagine glycosylation. Disulfide bonds link C298/C320 and C322/C329.

This sequence belongs to the polygalacturonase-inhibiting protein family. In terms of assembly, homodimer. Post-translationally, N-linked glycosylated. As to expression, mostly expressed in fruits, and, to a lower extent, in flowers and leaves.

The protein localises to the secreted. The protein resides in the extracellular space. It localises to the apoplast. Its subcellular location is the cell wall. Its function is as follows. Inhibitor of fungal polygalacturonase. It is an important factor for plant resistance to phytopathogenic fungi. The sequence is that of Polygalacturonase inhibitor (PGIP) from Pyrus communis (Pear).